The primary structure comprises 219 residues: Deoxyribose-phosphate aldolase (219 aa).

Catalysis depends on D88, which acts as the Proton donor/acceptor. The active-site Schiff-base intermediate with acetaldehyde is the K150. The Proton donor/acceptor role is filled by K179.

Belongs to the DeoC/FbaB aldolase family. DeoC type 1 subfamily.

The protein resides in the cytoplasm. It carries out the reaction 2-deoxy-D-ribose 5-phosphate = D-glyceraldehyde 3-phosphate + acetaldehyde. It functions in the pathway carbohydrate degradation; 2-deoxy-D-ribose 1-phosphate degradation; D-glyceraldehyde 3-phosphate and acetaldehyde from 2-deoxy-alpha-D-ribose 1-phosphate: step 2/2. Functionally, catalyzes a reversible aldol reaction between acetaldehyde and D-glyceraldehyde 3-phosphate to generate 2-deoxy-D-ribose 5-phosphate. The sequence is that of Deoxyribose-phosphate aldolase from Aquifex aeolicus (strain VF5).